Consider the following 197-residue polypeptide: uncharacterized protein (197 aa).

Residues 168 to 185 are compositionally biased toward basic and acidic residues; that stretch reads QRDDFSEDSHANDPKLVG. Positions 168 to 197 are disordered; the sequence is QRDDFSEDSHANDPKLVGDDYVPQAPEQIN.

This is an uncharacterized protein from Escherichia coli (strain K12).